The primary structure comprises 842 residues: MVAKVTAARRVSCADENRTPGDASQATISAAPEDKKQGFPDIREDGVARGVSASCGAVQNAASAQVPGARTPGVIGVPVASKTVEEARGGGAKRVITKRVGGVFVLDDSAARPNRKAGNLASGARLSRFSRSDRQRSDGFSGTQARANAGGVRRGEGRPFARDFSRGSTGGYRPAVRGPARPAGRVGSGPRGPAPLQVGAGKPAQNKRSFRGRKQQTYQYQHKDRLELEEKLLQQKKKNKEKLAAVPRSVEIMESVSVADLAKKMNLKASELIGKLFGMGMMVTMNQSIDADTATILASEYGCEVRIVSLYDETIIESVGDEHAVLRARPPVVTVMGHVDHGKTKTLDAIRSTRVAEGEFGGITQHIGAYAVSTPKGSITFLDTPGHEAFTMMRARGAEITDIVVLIVAADDGVMPQTIEAINHAKASKVPIIVAINKIDRADANPNKVMTRLAELGLAPEEWGGDTMYVSISALQGIGLDLLLDAIMLQAEVMELRANYGCCAEGRIIESRIDHGRGIVASVIVRRGVLRVGDTYVAGVYSGRVRAIFNDQGEKIQEATPSMPVEILGLEGMPNAGDPFQVTDSERIARQISLKRQELRRYENARNVKRITLDKLYESIEKGSVSEFKVIIKGDVQGSVEALKQSLEKLSTDEVQLRVIHSSVGAINDSDVMLAAADSNVTIVGFNVRPTPQAAVLAERERVEIKKYTVIYQAVEEMERAMEGMLKPSLKEVVLGSAEVRKVFKIPKVGSVAGVYVLEGVMKRNAIVHVVRDGIVLHSGKVSSLRREKDDVKEVHSGFECGVGVENYFDFRERDRLECAEMKEVSRKLKDAALSDAARLQG.

Disordered stretches follow at residues 1–41 and 112–219; these read MVAK…GFPD and RPNR…QTYQ. Basic and acidic residues-rich tracts occupy residues 32 to 41 and 153 to 165; these read PEDKKQGFPD and RRGEGRPFARDFS. The tr-type G domain maps to 328–497; sequence ARPPVVTVMG…MLQAEVMELR (170 aa). Residues 337 to 344 form a G1 region; the sequence is GHVDHGKT. 337–344 is a binding site for GTP; that stretch reads GHVDHGKT. Positions 362–366 are G2; that stretch reads GITQH. The tract at residues 383–386 is G3; that stretch reads DTPG. GTP contacts are provided by residues 383-387 and 437-440; these read DTPGH and NKID. Residues 437-440 are G4; the sequence is NKID. The tract at residues 473–475 is G5; sequence SAL.

Belongs to the TRAFAC class translation factor GTPase superfamily. Classic translation factor GTPase family. IF-2 subfamily.

Its subcellular location is the cytoplasm. One of the essential components for the initiation of protein synthesis. Protects formylmethionyl-tRNA from spontaneous hydrolysis and promotes its binding to the 30S ribosomal subunits. Also involved in the hydrolysis of GTP during the formation of the 70S ribosomal complex. The chain is Translation initiation factor IF-2 (infB) from Treponema pallidum (strain Nichols).